The primary structure comprises 530 residues: N-acetylmuramoyl-L-alanine amidase (530 aa).

The signal sequence occupies residues 1–22; the sequence is MKAWGALWIVLGLLLWPEPGAA. Asn-61, Asn-80, and Asn-174 each carry an N-linked (GlcNAc...) asparagine glycan. At Ser-219 the chain carries Phosphoserine. N-linked (GlcNAc...) asparagine glycosylation occurs at Asn-335. Positions 386–512 constitute an N-acetylmuramoyl-L-alanine amidase domain; the sequence is FLYVHHTYVP…RQLVLTHCPG (127 aa). His-390 contributes to the Zn(2+) binding site. An intrachain disulfide couples Cys-399 to Cys-405. Residue Asn-465 is glycosylated (N-linked (GlcNAc...) asparagine). His-502 and Cys-510 together coordinate Zn(2+).

Belongs to the N-acetylmuramoyl-L-alanine amidase 2 family. It depends on Zn(2+) as a cofactor. As to expression, strongly expressed in liver and fetal liver.

It localises to the secreted. The protein localises to the membrane. It catalyses the reaction Hydrolyzes the link between N-acetylmuramoyl residues and L-amino acid residues in certain cell-wall glycopeptides.. In terms of biological role, may play a scavenger role by digesting biologically active peptidoglycan (PGN) into biologically inactive fragments. Has no direct bacteriolytic activity. The sequence is that of N-acetylmuramoyl-L-alanine amidase (Pglyrp2) from Mus musculus (Mouse).